Here is a 391-residue protein sequence, read N- to C-terminus: Succinyl-diaminopimelate desuccinylase (391 aa).

A Zn(2+)-binding site is contributed by histidine 67. The active site involves aspartate 69. Residue aspartate 101 participates in Zn(2+) binding. The Proton acceptor role is filled by glutamate 135. Glutamate 136, glutamate 164, and histidine 353 together coordinate Zn(2+).

Belongs to the peptidase M20A family. DapE subfamily. As to quaternary structure, homodimer. Zn(2+) serves as cofactor. The cofactor is Co(2+).

The enzyme catalyses N-succinyl-(2S,6S)-2,6-diaminopimelate + H2O = (2S,6S)-2,6-diaminopimelate + succinate. The protein operates within amino-acid biosynthesis; L-lysine biosynthesis via DAP pathway; LL-2,6-diaminopimelate from (S)-tetrahydrodipicolinate (succinylase route): step 3/3. Its function is as follows. Catalyzes the hydrolysis of N-succinyl-L,L-diaminopimelic acid (SDAP), forming succinate and LL-2,6-diaminopimelate (DAP), an intermediate involved in the bacterial biosynthesis of lysine and meso-diaminopimelic acid, an essential component of bacterial cell walls. This is Succinyl-diaminopimelate desuccinylase from Rickettsia bellii (strain RML369-C).